Consider the following 94-residue polypeptide: Co-chaperonin GroES (94 aa).

This sequence belongs to the GroES chaperonin family. As to quaternary structure, heptamer of 7 subunits arranged in a ring. Interacts with the chaperonin GroEL.

It localises to the cytoplasm. In terms of biological role, together with the chaperonin GroEL, plays an essential role in assisting protein folding. The GroEL-GroES system forms a nano-cage that allows encapsulation of the non-native substrate proteins and provides a physical environment optimized to promote and accelerate protein folding. GroES binds to the apical surface of the GroEL ring, thereby capping the opening of the GroEL channel. This chain is Co-chaperonin GroES, found in Ruminiclostridium cellulolyticum (strain ATCC 35319 / DSM 5812 / JCM 6584 / H10) (Clostridium cellulolyticum).